Consider the following 251-residue polypeptide: MRKPIIAGNWKMNKTLSEAVSFVEEVKGQIPAASAVDAVVCSPALFLERLVAATEGTDLQVGAQNMHFEKNGAFTGEISPVALSDLKVGYVVLGHSERREMFAETDESVNKKTIAAFEHGLTPIVCCGETLEERESGKTFDLVAGQVTKALAGLTEEQVKATVIAYEPIWAIGTGKSSSSADANEVCAHIRKVVAEAVSPAAAEAVRIQYGGSVKPENIKEYMAQSDIDGALVGGASLEPASFLGLLEAVK.

Residue 9 to 11 (NWK) coordinates substrate. Residue His-95 is the Electrophile of the active site. Glu-167 serves as the catalytic Proton acceptor. Substrate-binding positions include Gly-173, Ser-213, and 234 to 235 (GG). Ser-213 carries the phosphoserine modification.

The protein belongs to the triosephosphate isomerase family. Homodimer.

It is found in the cytoplasm. It catalyses the reaction D-glyceraldehyde 3-phosphate = dihydroxyacetone phosphate. The protein operates within carbohydrate biosynthesis; gluconeogenesis. It functions in the pathway carbohydrate degradation; glycolysis; D-glyceraldehyde 3-phosphate from glycerone phosphate: step 1/1. Involved in the gluconeogenesis. Catalyzes stereospecifically the conversion of dihydroxyacetone phosphate (DHAP) to D-glyceraldehyde-3-phosphate (G3P). This chain is Triosephosphate isomerase, found in Bacillus cereus (strain ATCC 10987 / NRS 248).